A 209-amino-acid chain; its full sequence is MGKLYVFDHPLIQHKITYIRDKNTGTKEFRELVDEVASLMAFEITRDLPLEEIEIETPVSKAKTKVIAGKKLGLIPILRAGLGMVDGILKLIPAAKVGHIGLYRDPKTLQPVEYYVKLPTDVEERDFIVLDPMLATGGSAAEAINSLKKRGAKHIKLMCIVAAPEGVKVVQEEHPDVDIYVAALDEKLNDHGYVVPGLGDAGDRLFGTK.

Residues arginine 79, arginine 104, and aspartate 131–serine 139 each bind 5-phospho-alpha-D-ribose 1-diphosphate. Uracil is bound by residues valine 194 and glycine 199 to alanine 201. Aspartate 200 is a binding site for 5-phospho-alpha-D-ribose 1-diphosphate.

This sequence belongs to the UPRTase family. The cofactor is Mg(2+).

The catalysed reaction is UMP + diphosphate = 5-phospho-alpha-D-ribose 1-diphosphate + uracil. Its pathway is pyrimidine metabolism; UMP biosynthesis via salvage pathway; UMP from uracil: step 1/1. With respect to regulation, allosterically activated by GTP. In terms of biological role, catalyzes the conversion of uracil and 5-phospho-alpha-D-ribose 1-diphosphate (PRPP) to UMP and diphosphate. The polypeptide is Uracil phosphoribosyltransferase (Bacillus cytotoxicus (strain DSM 22905 / CIP 110041 / 391-98 / NVH 391-98)).